The primary structure comprises 123 residues: MALFKINKGEIMNFVNSTQLKTDIPSFDSGDTIIVHNRIVEGKKTRIQKFEGVVLRRRGSGSSETVIVRKESNGVGVEQSFNIHSPLVEKIEVIKYGKVRRAYISYMRNRSGKSARIKELNKQ.

It belongs to the bacterial ribosomal protein bL19 family.

This protein is located at the 30S-50S ribosomal subunit interface and may play a role in the structure and function of the aminoacyl-tRNA binding site. The chain is Large ribosomal subunit protein bL19 from Ureaplasma urealyticum serovar 10 (strain ATCC 33699 / Western).